A 271-amino-acid polypeptide reads, in one-letter code: 4-diphosphocytidyl-2-C-methyl-D-erythritol kinase (271 aa).

K17 is a catalytic residue. Residue 97–107 (PVGSGLGGGSS) coordinates ATP. Residue D137 is part of the active site.

Belongs to the GHMP kinase family. IspE subfamily.

The catalysed reaction is 4-CDP-2-C-methyl-D-erythritol + ATP = 4-CDP-2-C-methyl-D-erythritol 2-phosphate + ADP + H(+). Its pathway is isoprenoid biosynthesis; isopentenyl diphosphate biosynthesis via DXP pathway; isopentenyl diphosphate from 1-deoxy-D-xylulose 5-phosphate: step 3/6. In terms of biological role, catalyzes the phosphorylation of the position 2 hydroxy group of 4-diphosphocytidyl-2C-methyl-D-erythritol. The polypeptide is 4-diphosphocytidyl-2-C-methyl-D-erythritol kinase (Thermotoga maritima (strain ATCC 43589 / DSM 3109 / JCM 10099 / NBRC 100826 / MSB8)).